The following is a 263-amino-acid chain: Endonuclease 8 (263 aa).

The active-site Schiff-base intermediate with DNA is proline 2. The active-site Proton donor is glutamate 3. Lysine 53 functions as the Proton donor; for beta-elimination activity in the catalytic mechanism. The DNA site is built by glutamine 70, arginine 125, and asparagine 169. An FPG-type zinc finger spans residues 229-263 (KVFHRDGEPCERCGGIIEKTTLSSRPFYWCPGCQH). Arginine 253 (proton donor; for delta-elimination activity) is an active-site residue.

Belongs to the FPG family. Requires Zn(2+) as cofactor.

It carries out the reaction 2'-deoxyribonucleotide-(2'-deoxyribose 5'-phosphate)-2'-deoxyribonucleotide-DNA = a 3'-end 2'-deoxyribonucleotide-(2,3-dehydro-2,3-deoxyribose 5'-phosphate)-DNA + a 5'-end 5'-phospho-2'-deoxyribonucleoside-DNA + H(+). In terms of biological role, involved in base excision repair of DNA damaged by oxidation or by mutagenic agents. Acts as a DNA glycosylase that recognizes and removes damaged bases. Has a preference for oxidized pyrimidines, such as thymine glycol, 5,6-dihydrouracil and 5,6-dihydrothymine. Has AP (apurinic/apyrimidinic) lyase activity and introduces nicks in the DNA strand. Cleaves the DNA backbone by beta-delta elimination to generate a single-strand break at the site of the removed base with both 3'- and 5'-phosphates. The protein is Endonuclease 8 of Escherichia coli O127:H6 (strain E2348/69 / EPEC).